A 245-amino-acid chain; its full sequence is MKKNIKYSQNFLTNEKVLNQIIKQLNLKETDTVYEIGTGKGHLTTKLAKISKQVTSIELDSHLFNLSSEKLKLNIRVTLIHQDILQFQFPNKQRYKIVGSIPYHLSTQIIKKVVFESHASDIYLIVEEGFYKRTLDIHRSLGLLLHTQVSIQQLLKLPAECFHPKPKVNSVLIKLTRHTTDVPDKYWKLYTYFVSKWVNREYRQLFTKNQFHQAMKHAKVNNLSTVTYEQVLSIFNSYLLFNGRK.

The S-adenosyl-L-methionine site is built by Asn-10, Leu-12, Gly-37, Glu-58, Asp-83, and Ser-100.

The protein belongs to the class I-like SAM-binding methyltransferase superfamily. rRNA adenine N(6)-methyltransferase family.

The catalysed reaction is adenosine(2085) in 23S rRNA + 2 S-adenosyl-L-methionine = N(6)-dimethyladenosine(2085) in 23S rRNA + 2 S-adenosyl-L-homocysteine + 2 H(+). Functionally, this protein produces a dimethylation of the adenine residue at position 2085 in 23S rRNA, resulting in reduced affinity between ribosomes and macrolide-lincosamide-streptogramin B antibiotics. The protein is rRNA adenine N-6-methyltransferase of Streptococcus sanguinis.